Reading from the N-terminus, the 212-residue chain is Large ribosomal subunit protein uL1 (212 aa).

The protein belongs to the universal ribosomal protein uL1 family. Part of the 50S ribosomal subunit.

Functionally, binds directly to 23S rRNA. Probably involved in E site tRNA release. Protein L1 is also a translational repressor protein, it controls the translation of its operon by binding to its mRNA. In Methanothrix thermoacetophila (strain DSM 6194 / JCM 14653 / NBRC 101360 / PT) (Methanosaeta thermophila), this protein is Large ribosomal subunit protein uL1.